The following is a 131-amino-acid chain: Superoxide dismutase [Ni] (131 aa).

Residues 1 to 14 (MLSRLFAPKVKVSA) constitute a propeptide that is removed on maturation. Ni(2+) contacts are provided by His-15, Cys-16, and Cys-20.

This sequence belongs to the nickel superoxide dismutase family. In terms of assembly, homohexamer. The hexameric protein has roughly the shape of a hollow sphere with an outer diameter of 72 Angstroms and a large inner cavity. The cofactor is Ni(2+).

Its subcellular location is the cytoplasm. It catalyses the reaction 2 superoxide + 2 H(+) = H2O2 + O2. This chain is Superoxide dismutase [Ni] (sodN), found in Streptomyces seoulensis.